A 186-amino-acid chain; its full sequence is Ribosome-recycling factor (186 aa).

The protein belongs to the RRF family.

It localises to the cytoplasm. Functionally, responsible for the release of ribosomes from messenger RNA at the termination of protein biosynthesis. May increase the efficiency of translation by recycling ribosomes from one round of translation to another. This Porphyromonas gingivalis (strain ATCC BAA-308 / W83) protein is Ribosome-recycling factor.